The primary structure comprises 513 residues: Histidine ammonia-lyase (513 aa).

The 5-imidazolinone (Ala-Gly) cross-link spans 142–144 (ASG). Ser-143 is modified (2,3-didehydroalanine (Ser)).

The protein belongs to the PAL/histidase family. Contains an active site 4-methylidene-imidazol-5-one (MIO), which is formed autocatalytically by cyclization and dehydration of residues Ala-Ser-Gly.

It is found in the cytoplasm. The catalysed reaction is L-histidine = trans-urocanate + NH4(+). It participates in amino-acid degradation; L-histidine degradation into L-glutamate; N-formimidoyl-L-glutamate from L-histidine: step 1/3. This chain is Histidine ammonia-lyase, found in Mesorhizobium japonicum (strain LMG 29417 / CECT 9101 / MAFF 303099) (Mesorhizobium loti (strain MAFF 303099)).